Consider the following 201-residue polypeptide: GTP-binding protein ryh1 (201 aa).

G18–T25 serves as a coordination point for GTP. The Effector region signature appears at Y40–F48. Residues D66 to Q70 and N124 to D127 each bind GTP. 2 S-geranylgeranyl cysteine lipidation sites follow: C199 and C201. Residue C201 is modified to Cysteine methyl ester.

The protein belongs to the small GTPase superfamily. Rab family.

Its subcellular location is the endosome membrane. The protein resides in the golgi apparatus membrane. The protein localises to the nucleus. It is found in the cytoplasm. It localises to the cytosol. Has a role in retrograde traffricking of proteins from the endosome to the Golgi. Involved in protein transport to the plasma membrane. Involved in the secretory pathway where it has a role in acid phosphatase secretion. Required also in normal glycosylation trafficking pathways. In Schizosaccharomyces pombe (strain 972 / ATCC 24843) (Fission yeast), this protein is GTP-binding protein ryh1 (ryh1).